Reading from the N-terminus, the 282-residue chain is Deoxyribonuclease-1 (282 aa).

The signal sequence occupies residues methionine 1–serine 22. Residue asparagine 40 is glycosylated (N-linked (GlcNAc...) asparagine). Glutamate 100 is a catalytic residue. The cysteines at positions 123 and 126 are disulfide-linked. N-linked (GlcNAc...) asparagine glycosylation is present at asparagine 128. Residue histidine 156 is part of the active site. A disulfide bridge links cysteine 195 with cysteine 231.

The protein belongs to the DNase I family. It depends on Ca(2+) as a cofactor. Mg(2+) serves as cofactor. As to expression, principally in tissues of the digestive system. Highest levels found in urine, but also relatively abundant in semen and saliva.

Its subcellular location is the secreted. The protein resides in the zymogen granule. The protein localises to the nucleus envelope. The catalysed reaction is Endonucleolytic cleavage to 5'-phosphodinucleotide and 5'-phosphooligonucleotide end-products.. Serum endocuclease secreted into body fluids by a wide variety of exocrine and endocrine organs. Expressed by non-hematopoietic tissues and preferentially cleaves protein-free DNA. Among other functions, seems to be involved in cell death by apoptosis. Binds specifically to G-actin and blocks actin polymerization. Together with DNASE1L3, plays a key role in degrading neutrophil extracellular traps (NETs). NETs are mainly composed of DNA fibers and are released by neutrophils to bind pathogens during inflammation. Degradation of intravascular NETs by DNASE1 and DNASE1L3 is required to prevent formation of clots that obstruct blood vessels and cause organ damage following inflammation. In Homo sapiens (Human), this protein is Deoxyribonuclease-1.